Here is a 330-residue protein sequence, read N- to C-terminus: o-succinylbenzoate synthase (330 aa).

Lys-130 serves as the catalytic Proton donor. Mg(2+) is bound by residues Asp-155, Glu-184, and Asp-206. Lys-228 functions as the Proton acceptor in the catalytic mechanism.

Belongs to the mandelate racemase/muconate lactonizing enzyme family. MenC type 1 subfamily. In terms of assembly, monomer. It depends on a divalent metal cation as a cofactor.

The enzyme catalyses (1R,6R)-6-hydroxy-2-succinyl-cyclohexa-2,4-diene-1-carboxylate = 2-succinylbenzoate + H2O. It participates in quinol/quinone metabolism; 1,4-dihydroxy-2-naphthoate biosynthesis; 1,4-dihydroxy-2-naphthoate from chorismate: step 4/7. Its pathway is cofactor biosynthesis; phylloquinone biosynthesis. Converts 2-succinyl-6-hydroxy-2,4-cyclohexadiene-1-carboxylate (SHCHC) to 2-succinylbenzoate (OSB). Does not show N-succinylamino acid racemase (NSAR) activity with N-succinyl-L-phenylglycine as substrate. The polypeptide is o-succinylbenzoate synthase (Bdellovibrio bacteriovorus (strain ATCC 15356 / DSM 50701 / NCIMB 9529 / HD100)).